The following is a 371-amino-acid chain: 4-hydroxyphenylpyruvate dioxygenase-like protein (371 aa).

VOC domains lie at 7–135 and 160–328; these read RLCH…LLQR and HVDH…VFTK. Histidine 163, histidine 258, and glutamate 339 together coordinate Fe cation.

It belongs to the 4HPPD family. The cofactor is Fe cation.

The protein resides in the mitochondrion. The enzyme catalyses 3-(4-hydroxyphenyl)pyruvate + O2 = (S)-4-hydroxymandelate + CO2. Its function is as follows. Iron-dependent dioxygenase that catalyzes the conversion of 4-hydroxyphenylpyruvate (4-HPPA) to 4-hydroxymandelate (4-HMA) in the mitochondria, one of the steps in the biosynthesis of coenzyme Q10 from tyrosine. The protein is 4-hydroxyphenylpyruvate dioxygenase-like protein of Mus musculus (Mouse).